A 706-amino-acid chain; its full sequence is Glutamine-dependent NAD(+) synthetase (706 aa).

Positions 5–275 constitute a CN hydrolase domain; that stretch reads VTVATCALNQ…VEVLTATLDL (271 aa). Catalysis depends on Glu45, which acts as the Proton acceptor; for glutaminase activity. Residue Lys114 is the For glutaminase activity of the active site. Catalysis depends on Cys175, which acts as the Nucleophile; for glutaminase activity. The tract at residues 325 to 706 is ligase; sequence YHSPEEEISL…AAPQSLDGVD (382 aa). 355–362 lines the ATP pocket; that stretch reads PLSGGVDS. Residue Ser357 is part of the active site.

In the C-terminal section; belongs to the NAD synthetase family. As to quaternary structure, homohexamer.

It carries out the reaction deamido-NAD(+) + L-glutamine + ATP + H2O = L-glutamate + AMP + diphosphate + NAD(+) + H(+). It functions in the pathway cofactor biosynthesis; NAD(+) biosynthesis; NAD(+) from deamido-NAD(+) (L-Gln route): step 1/1. Its function is as follows. Catalyzes the final step of the nicotinamide adenine dinucleotide (NAD) de novo synthesis pathway, the ATP-dependent amidation of deamido-NAD using L-glutamine as a nitrogen source. The polypeptide is Glutamine-dependent NAD(+) synthetase (NADSYN1) (Macaca fascicularis (Crab-eating macaque)).